Consider the following 359-residue polypeptide: MAGVACLGKTADADEWCDSGLGSLGPDAAAPGGPGLGAELGPELSWAPLVFGYVTEDGDTALHLAVIHQHEPFLDFLLGFSAGTEYLDLQNDLGQTALHLAAILGEASTVEKLYAAGAGVLVAERGGHTALHLACRVRAHTCACVLLQPRPSHPRDASDTYLTQSQDCTPDTSHAPAAVDSQPNPENEEEPRDEDWRLQLEAENYDGHTPLHVAVIHKDAEMVRLLRDAGADLNKPEPTCGRTPLHLAVEAQAASVLELLLKAGADPTARMYGGRTPLGSALLRPNPILARLLRAHGAPEPEDEDDKLSPCSSSGSDSDSDNRDEGDEYDDIVVHSGRSQNRQPPSPASKPLPDDPNPA.

A phosphoserine; by RPS6KA1 mark is found at Ser19 and Ser23. 3 ANK repeats span residues 57 to 86, 93 to 122, and 126 to 155; these read DGDTALHLAVIHQHEPFLDFLLGFSAGTEY, LGQTALHLAAILGEASTVEKLYAAGAGVLV, and GGHTALHLACRVRAHTCACVLLQPRPSHPR. The tract at residues 153–194 is disordered; that stretch reads HPRDASDTYLTQSQDCTPDTSHAPAAVDSQPNPENEEEPRDE. Residues 160–172 are compositionally biased toward polar residues; the sequence is TYLTQSQDCTPDT. ANK repeat units lie at residues 206 to 235, 240 to 269, and 273 to 302; these read DGHTPLHVAVIHKDAEMVRLLRDAGADLNK, CGRTPLHLAVEAQAASVLELLLKAGADPTA, and GGRTPLGSALLRPNPILARLLRAHGAPEPE. Residues 298–359 are disordered; that stretch reads APEPEDEDDK…KPLPDDPNPA (62 aa). A phosphoserine mark is found at Ser313 and Ser318. Residues 318–331 show a composition bias toward acidic residues; it reads SDSDNRDEGDEYDD. The segment covering 344–359 has biased composition (pro residues); it reads PPSPASKPLPDDPNPA.

Belongs to the NF-kappa-B inhibitor family. In terms of assembly, interacts with THRB (via ligand-binding domain). Interacts with RELA and REL. Interacts with COMMD1. Interacts with inhibitor kappa B-interacting Ras-like NKIRAS1 and NKIRAS2. Post-translationally, phosphorylated by RPS6KA1; followed by degradation. Interaction with NKIRAS1 and NKIRAS2 probably prevents phosphorylation. Highly expressed in testis followed by spleen.

The protein localises to the cytoplasm. It localises to the nucleus. In terms of biological role, inhibits NF-kappa-B by complexing with and trapping it in the cytoplasm. However, the unphosphorylated form resynthesized after cell stimulation is able to bind NF-kappa-B allowing its transport to the nucleus and protecting it to further NFKBIA-dependent inactivation. Association with inhibitor kappa B-interacting NKIRAS1 and NKIRAS2 prevent its phosphorylation rendering it more resistant to degradation, explaining its slower degradation. The chain is NF-kappa-B inhibitor beta (Nfkbib) from Mus musculus (Mouse).